Consider the following 210-residue polypeptide: T-cell surface glycoprotein CD8 beta chain (210 aa).

An N-terminal signal peptide occupies residues 1–21; the sequence is MRPRLWLLLAAQLAVLHGSSV. One can recognise an Ig-like V-type domain in the interval 22 to 132; sequence LQQTPAYIKV…ELTFGKGTQL (111 aa). The Extracellular portion of the chain corresponds to 22-170; sequence LQQTPAYIKV…ETQKGPLCSP (149 aa). Cys41 and Cys116 are joined by a disulfide. An N-linked (GlcNAc...) asparagine glycan is attached at Asn102. The helical transmembrane segment at 171–191 threads the bilayer; it reads ITLGLLVAGVLVLLVSLGVAI. Over 192 to 210 the chain is Cytoplasmic; it reads HLCCRRRRARLRFMKQFYK.

As to quaternary structure, forms disulfide-linked heterodimers with CD8A at the cell surface. Interacts with CD3D; this interaction couples TCR-CD3 with CD8. Interacts with LCK. In terms of processing, phosphorylated as a consequence of T-cell activation. Palmitoylated at the cytoplasmic tail and thereby targets the heterodimer CD8A/CD8B to lipid rafts unlike CD8A homodimers.

The protein resides in the cell membrane. Integral membrane glycoprotein that plays an essential role in the immune response and serves multiple functions in responses against both external and internal offenses. In T-cells, functions primarily as a coreceptor for MHC class I molecule:peptide complex. The antigens presented by class I peptides are derived from cytosolic proteins while class II derived from extracellular proteins. Interacts simultaneously with the T-cell receptor (TCR) and the MHC class I proteins presented by antigen presenting cells (APCs). In turn, recruits the Src kinase LCK to the vicinity of the TCR-CD3 complex. A palmitoylation site in the cytoplasmic tail of CD8B chain contributes to partitioning of CD8 into the plasma membrane lipid rafts where signaling proteins are enriched. Once LCK recruited, it initiates different intracellular signaling pathways by phosphorylating various substrates ultimately leading to lymphokine production, motility, adhesion and activation of cytotoxic T-lymphocytes (CTLs). Additionally, plays a critical role in thymic selection of CD8+ T-cells. The sequence is that of T-cell surface glycoprotein CD8 beta chain (CD8B) from Pongo pygmaeus (Bornean orangutan).